Consider the following 207-residue polypeptide: Ribosomal RNA small subunit methyltransferase G (207 aa).

S-adenosyl-L-methionine contacts are provided by residues G73, L78, 124–125 (VE), and R139.

Belongs to the methyltransferase superfamily. RNA methyltransferase RsmG family.

The protein resides in the cytoplasm. It carries out the reaction guanosine(527) in 16S rRNA + S-adenosyl-L-methionine = N(7)-methylguanosine(527) in 16S rRNA + S-adenosyl-L-homocysteine. Specifically methylates the N7 position of guanine in position 527 of 16S rRNA. This Salmonella choleraesuis (strain SC-B67) protein is Ribosomal RNA small subunit methyltransferase G.